The primary structure comprises 331 residues: MKILAYCVRPDEIDSFKNFSEKYGHTVDLIPDSFGPNVAHLAKGYDGISILGNDTCNREALEKIKDCGIKYLATRTAGVNNIDFDAAKEFGINVANVPAYSPNSVSEFTVGLALSLTRKIPFALKRVELNNFALGGLIGVELRNLTLGVIGTGRIGLKVIEGFSGFGMKKMIGYDIFENEKAKEYIEYKSLDEVYKEADIITLHAPLTDDNYHMIGKESIAKMKDGVFIINAARGALIDSEALIEGLKSGKIAGAALDSYEYEQGVFHNNKMNEIMKDDTLERLKSFPNVVITPHLGFYTDEAVSNMVEITLMNLQEFELKGTCKNQRVCK.

NAD(+) is bound by residues 154–155, Asp-175, 205–206, Asn-211, 232–234, and Asp-258; these read RI, AP, and AAR. The active site involves Arg-234. Glu-263 is a catalytic residue. His-295 acts as the Proton donor in catalysis.

Belongs to the D-isomer specific 2-hydroxyacid dehydrogenase family.

It catalyses the reaction (R)-3-phenyllactate + NAD(+) = 3-phenylpyruvate + NADH + H(+). It carries out the reaction (2R)-2-hydroxy-3-(4-hydroxyphenyl)propanoate + NAD(+) = 3-(4-hydroxyphenyl)pyruvate + NADH + H(+). The enzyme catalyses 3-(indol-3-yl)lactate + NAD(+) = indole-3-pyruvate + NADH + H(+). The protein operates within amino-acid degradation. Its function is as follows. Essential for the reductive metabolism of L-phenylalanine, L-tyrosine and L-tryptophan. Catalyzes the conversion of phenylpyruvic acid to phenyllactic acid, 4-hydroxy-phenylpyruvic acid to 4-hydroxy-phenyllactic acid, and indolepyruvic acid to indolelactic acid. The polypeptide is Aromatic 2-oxoacid reductase (Clostridium sporogenes (strain ATCC 15579)).